The primary structure comprises 539 residues: MYGGDEYATNSDYYDDYAHTGDPQLDMEYERNYYAARMPDNVKYFLINFCQAIKEGNLYDIQNMYENTFPQISDHHFDKTAWPEEQEVAAIVDNDKVFLILYKELYYRHIHARIPGGPKLEQRINSFFNYCDFFNLIISAQNPVMLELPDIWLWELVDEFVYQFQNFAQYRARLTEKSQDEIQQLCVNHSNEWSILCILNVLHSLVDISNIKKQLEAISQGVDPQTVAGDFGKLSFYKMLGYFSLVGLLRVHSLLGDYYQAIKVLEPIEIHKKSAYSHIPACQISTSYYVGFAYMMMRRYADAIRTFSDILLYIQRTKQLYSTRSYQNDQINKQAEQMYHLLAICLVLHPQCIDESIQQVLREKNYHDAMFKMQCGDLEVFKSFFVFACPRFVSPCPPAVDAPMDDYVKDPMEHQLQVFMDEVRQQKDLPTTRSYLKLYTTLPLTKLASFIDPNASEDDVSKLLIRLLCFKHKMRNLVWSKGPSGLEGTFKSGSELDFYIDDDMIHIADTKVSHRYGDFFVRKILKFNDLNRKLKNINI.

One can recognise a PCI domain in the interval 306–514 (TFSDILLYIQ…IHIADTKVSH (209 aa)).

This sequence belongs to the eIF-3 subunit L family. Component of the eukaryotic translation initiation factor 3 (eIF-3) complex. The eIF-3 complex interacts with pix.

It is found in the cytoplasm. Component of the eukaryotic translation initiation factor 3 (eIF-3) complex, which is involved in protein synthesis of a specialized repertoire of mRNAs and, together with other initiation factors, stimulates binding of mRNA and methionyl-tRNAi to the 40S ribosome. The eIF-3 complex specifically targets and initiates translation of a subset of mRNAs involved in cell proliferation. This chain is Eukaryotic translation initiation factor 3 subunit L, found in Drosophila melanogaster (Fruit fly).